The primary structure comprises 325 residues: MTEVLLEDLDHVGPATAQKLKDAGFTTIEAIAVASPAELANSAEIGESTAAKIINAARQSADIGGFETGDLVLERRKLVGKLSTGCTEFDEMMGGGIETQSITEMYGEFGSGKTQIAHQLAVNVQLPPEQGGLGGSVIMIDTENTFRPERIAQMVKGISDKHGIEYDPEEFLKNIHVARAFNSNHQILLVDSANELANELKNTEMPVKLLIVDSLTAHFRAEYIGRGTLADRQQKLNKHLHEILRFGDLSNACVVVTNQVMSKPDAFFGDPTKPIGGHILGHTATFRLYIRKSKGEKRIVKLVDSPNLPDGEALISVTTDGIGDA.

Position 107–114 (107–114) interacts with ATP; that stretch reads GEFGSGKT.

It belongs to the eukaryotic RecA-like protein family.

Its function is as follows. Involved in DNA repair and in homologous recombination. Binds and assemble on single-stranded DNA to form a nucleoprotein filament. Hydrolyzes ATP in a ssDNA-dependent manner and promotes DNA strand exchange between homologous DNA molecules. In Methanococcoides burtonii (strain DSM 6242 / NBRC 107633 / OCM 468 / ACE-M), this protein is DNA repair and recombination protein RadA.